A 173-amino-acid chain; its full sequence is NADH-ubiquinone oxidoreductase chain 6 (173 aa).

5 consecutive transmembrane segments (helical) span residues 1–21, 27–47, 48–68, 87–107, and 139–159; these read MTYFMFFLGLCFVLGGLAVAS, YGVVGLVLASVAGCGWLLSLG, ISFVSLVLFMVYLGGMLVVFV, VIGYGAGFVGVLMVGMVIGGF, and CGVGMFLVAGWGLLLTLFVVL.

Belongs to the complex I subunit 6 family.

It is found in the mitochondrion membrane. The enzyme catalyses a ubiquinone + NADH + 5 H(+)(in) = a ubiquinol + NAD(+) + 4 H(+)(out). Its function is as follows. Core subunit of the mitochondrial membrane respiratory chain NADH dehydrogenase (Complex I) that is believed to belong to the minimal assembly required for catalysis. Complex I functions in the transfer of electrons from NADH to the respiratory chain. The immediate electron acceptor for the enzyme is believed to be ubiquinone. This is NADH-ubiquinone oxidoreductase chain 6 (MT-ND6) from Alca torda (Razorbill).